Consider the following 703-residue polypeptide: Calpain-8 (703 aa).

The 300-residue stretch at 45-344 (LFKDPEFPAC…FSRLEICNLS (300 aa)) folds into the Calpain catalytic domain. Active-site residues include cysteine 105, histidine 262, and asparagine 286. The domain III stretch occupies residues 356 to 379 (WNLVLFNGHWTRGSTAGGCQNYPA). EF-hand domains follow at residues 575 to 610 (FNIN…IQKY), 618 to 640 (DYNH…AGFT), and 670 to 703 (IRLE…CVLV). Positions 588, 590, 592, 594, 599, 618, 620, 622, 624, and 629 each coordinate Ca(2+).

Belongs to the peptidase C2 family. In terms of assembly, monomer and homooligomer. Interacts with COPS1/GPS1, COPB1, EYA2, NME2, NME4 and TOMM70. Ca(2+) is required as a cofactor. In terms of processing, undergoes autolytic cleavage between Ala-5 and Ala-6 which gives rise to fragments extending from Ala-6 to the C-terminus, Ala-6 to the EF-hand 2 domain and from Ala-6 to the beginning of domain III. In terms of tissue distribution, stomach.

The protein resides in the cytoplasm. It localises to the golgi apparatus. The catalysed reaction is Broad endopeptidase specificity.. In terms of biological role, calcium-regulated non-lysosomal thiol-protease. Involved in membrane trafficking in the gastric surface mucus cells (pit cells) and may involve the membrane trafficking of mucus cells via interactions with coat protein. Proteolytically cleaves the beta-subunit of coatomer complex. This is Calpain-8 (CAPN8) from Homo sapiens (Human).